The chain runs to 75 residues: Kappa-scoloptoxin(03)-Ssm1d (75 aa).

The signal sequence occupies residues 1–23 (MKLSMAILLVMALIIFTLDKNYS).

This sequence belongs to the scoloptoxin-03 family. Contains 3 disulfide bonds. As to expression, expressed by the venom gland.

The protein resides in the secreted. In terms of biological role, inhibits voltage-gated potassium channels. The chain is Kappa-scoloptoxin(03)-Ssm1d from Scolopendra mutilans (Chinese red-headed centipede).